We begin with the raw amino-acid sequence, 436 residues long: 3-ketoacyl-CoA thiolase (436 aa).

Residue cysteine 99 is the Acyl-thioester intermediate of the active site. Catalysis depends on proton acceptor residues histidine 392 and cysteine 422.

Belongs to the thiolase-like superfamily. Thiolase family. As to quaternary structure, heterotetramer of two alpha chains (FadJ) and two beta chains (FadI).

It is found in the cytoplasm. The catalysed reaction is an acyl-CoA + acetyl-CoA = a 3-oxoacyl-CoA + CoA. Its pathway is lipid metabolism; fatty acid beta-oxidation. Functionally, catalyzes the final step of fatty acid oxidation in which acetyl-CoA is released and the CoA ester of a fatty acid two carbons shorter is formed. The protein is 3-ketoacyl-CoA thiolase of Alteromonas mediterranea (strain DSM 17117 / CIP 110805 / LMG 28347 / Deep ecotype).